The following is a 585-amino-acid chain: A-type ATP synthase subunit A (585 aa).

Gly-231 to Thr-238 is an ATP binding site.

This sequence belongs to the ATPase alpha/beta chains family. As to quaternary structure, has multiple subunits with at least A(3), B(3), C, D, E, F, H, I and proteolipid K(x).

It localises to the cell membrane. The catalysed reaction is ATP + H2O + 4 H(+)(in) = ADP + phosphate + 5 H(+)(out). Functionally, component of the A-type ATP synthase that produces ATP from ADP in the presence of a proton gradient across the membrane. The A chain is the catalytic subunit. The chain is A-type ATP synthase subunit A from Desulfurococcus sp. (strain SY).